Consider the following 131-residue polypeptide: Small ribosomal subunit protein bS6 (131 aa).

The interval 99–131 is disordered; that stretch reads ASPMVKAKDERRERREDFATETNEDSDAGDSEE. Over residues 104–116 the composition is skewed to basic and acidic residues; sequence KAKDERRERREDF. Positions 120–131 are enriched in acidic residues; that stretch reads TNEDSDAGDSEE.

The protein belongs to the bacterial ribosomal protein bS6 family.

Its function is as follows. Binds together with bS18 to 16S ribosomal RNA. The protein is Small ribosomal subunit protein bS6 of Sodalis glossinidius (strain morsitans).